We begin with the raw amino-acid sequence, 64 residues long: OPG024 protein (64 aa).

The segment at 1-64 is disordered; it reads MSSKGGSSGG…GGVKSGTGKI (64 aa). Residues 23-34 show a composition bias toward low complexity; sequence NKGSKTYTSSGS. The span at 49–64 shows a compositional bias: gly residues; it reads VNGGVNGGVKSGTGKI.

Belongs to the orthopoxvirus OPG024 family.

The sequence is that of OPG024 protein (OPG023) from Cynomys gunnisoni (Gunnison's prairie dog).